The chain runs to 589 residues: ABC transporter G family member 8 (589 aa).

The ABC transporter domain occupies 16-261; sequence LTTSSISYTI…LLFKGFTVPP (246 aa). ATP is bound at residue 62-69; the sequence is GPSGAGKS. One can recognise an ABC transmembrane type-2 domain in the interval 311–521; sequence TEISLLARRF…ALDALLINEY (211 aa). A run of 7 helical transmembrane segments spans residues 335-355, 365-385, 412-432, 441-461, 470-490, 499-519, and 560-580; these read ALEALVVGLVLGTIYINIGIG, MFAFTLTFLLSSTTETLPIFI, VFLPYLFVISIIYSVSVYFLI, FGYFVLVIWIILLMANSFVLF, ITGTSLVTILLAAFFLFSGYF, YWLFMYFFSMYKYALDALLIN, and FNVYVLLGFFVLYRVLCFLAL.

This sequence belongs to the ABC transporter superfamily. ABCG family. Eye pigment precursor importer (TC 3.A.1.204) subfamily.

The protein localises to the membrane. In Arabidopsis thaliana (Mouse-ear cress), this protein is ABC transporter G family member 8 (ABCG8).